Reading from the N-terminus, the 256-residue chain is Probable aquaporin TIP5-1 (256 aa).

M1 carries the post-translational modification N-acetylmethionine. 5 consecutive transmembrane segments (helical) span residues 24-44 (CYVS…GSVM), 57-77 (PFGV…SVYI), 89-109 (AVTF…MFYW), 144-164 (FGAS…VFTA), and 171-191 (LPLA…VLAA). Residues 87–89 (NPA) carry the NPA 1 motif. An NPA 2 motif is present at residues 200-202 (NPA). The chain crosses the membrane as a helical span at residues 222-242 (VGPLLGGATAALVYDNVVVPV). S249 carries the post-translational modification Phosphoserine.

It belongs to the MIP/aquaporin (TC 1.A.8) family. TIP (TC 1.A.8.10) subfamily.

The protein localises to the membrane. Potential aquaporin, which may facilitate the transport of water and small neutral solutes across cell membranes. The polypeptide is Probable aquaporin TIP5-1 (TIP5-1) (Arabidopsis thaliana (Mouse-ear cress)).